The following is a 180-amino-acid chain: Oligoribonuclease (180 aa).

An Exonuclease domain is found at L7–L170. Y128 is a catalytic residue.

It belongs to the oligoribonuclease family.

The protein localises to the cytoplasm. Functionally, 3'-to-5' exoribonuclease specific for small oligoribonucleotides. This Marinobacter nauticus (strain ATCC 700491 / DSM 11845 / VT8) (Marinobacter aquaeolei) protein is Oligoribonuclease.